Consider the following 1323-residue polypeptide: DNA-directed RNA polymerase subunit beta' (1323 aa).

Residues Cys-60, Cys-62, Cys-75, and Cys-78 each coordinate Zn(2+). Mg(2+) is bound by residues Asp-535, Asp-537, and Asp-539. Zn(2+)-binding residues include Cys-894, Cys-977, Cys-984, and Cys-987.

Belongs to the RNA polymerase beta' chain family. As to quaternary structure, the RNAP catalytic core consists of 2 alpha, 1 beta, 1 beta' and 1 omega subunit. When a sigma factor is associated with the core the holoenzyme is formed, which can initiate transcription. Mg(2+) is required as a cofactor. It depends on Zn(2+) as a cofactor.

It carries out the reaction RNA(n) + a ribonucleoside 5'-triphosphate = RNA(n+1) + diphosphate. Functionally, DNA-dependent RNA polymerase catalyzes the transcription of DNA into RNA using the four ribonucleoside triphosphates as substrates. The polypeptide is DNA-directed RNA polymerase subunit beta' (Corynebacterium jeikeium (strain K411)).